Here is a 356-residue protein sequence, read N- to C-terminus: Protein pelota homolog (356 aa).

This sequence belongs to the eukaryotic release factor 1 family. Pelota subfamily. Monomer. A divalent metal cation serves as cofactor.

Its subcellular location is the cytoplasm. Its function is as follows. May function in recognizing stalled ribosomes, interact with stem-loop structures in stalled mRNA molecules, and effect endonucleolytic cleavage of the mRNA. May play a role in the release non-functional ribosomes and degradation of damaged mRNAs. Has endoribonuclease activity. The sequence is that of Protein pelota homolog from Pyrococcus horikoshii (strain ATCC 700860 / DSM 12428 / JCM 9974 / NBRC 100139 / OT-3).